Consider the following 394-residue polypeptide: Putative serine protease HhoA (394 aa).

A signal peptide spans 1-24 (MKYPTWLRRIGGYLLAFAVGTAFG). Positions 293-377 (MMNITVDQAQ…ALKLDLLRGD (85 aa)) constitute a PDZ domain.

Belongs to the peptidase S1C family.

The protein localises to the periplasm. In terms of biological role, a putative protease, its function overlaps that of the related putative proteases HhoB and HtrA. This chain is Putative serine protease HhoA (hhoA), found in Synechocystis sp. (strain ATCC 27184 / PCC 6803 / Kazusa).